The following is a 342-amino-acid chain: Apurinic-apyrimidinic endonuclease 1 (342 aa).

Zn(2+)-binding residues include His61, Glu136, Asp170, His173, His207, Asp220, His222, and Glu252. Over residues 299–310 the composition is skewed to basic and acidic residues; the sequence is HLNKFEKKEAKK. The segment at 299 to 342 is disordered; it reads HLNKFEKKEAKKDRKKKSKDGDQTTLLLRKKQKLGNAEVKSLDE.

Belongs to the AP endonuclease 2 family. Zn(2+) is required as a cofactor.

It is found in the nucleus. Functionally, DNA repair enzyme that cleaves apurinic/apyrimidinic (AP) sites and removes 3'-blocking groups present at single strand breaks of damaged DNA. Provides back-up AP endonuclease (APE) activity to apn2 together with uve1. This is Apurinic-apyrimidinic endonuclease 1 (apn1) from Schizosaccharomyces pombe (strain 972 / ATCC 24843) (Fission yeast).